Consider the following 514-residue polypeptide: MEISWGRALWRNFLGQSPDWYKLALLIFLIINPLIFLVNPFIAGWLLVAEFIFTLAMALKCYPLLPGGLLAIEAVMIGMTSPSHVRAEVAANLEVLLLLMFMVAGIYFMKQLLLFIFTRLLLSIRSKALLSLSFCLAAAFLSAFLDALTVVAVVISVAVGFYGIYHRVASSRGEDNDILDDSHIDQHFKVILEQFRGFLRSLMMHAGVGTALGGVMTMVGEPQNLIIAKAAGWSFGDFFLRMSPITVPVLVCGLLTCLLVERMGWFGYGEKLPEKVRQVLQQYDDQSRLQRTRQDKVRLIVQALIGIWLVIALALHLAEVGLIGLSVIIMATSLTGVTDEHAIGKAFTESLPFTALLTVFFSIVAVIIDQSLFSPIIHFVLQASEHAQLTLFYLFNGLLSSISDNVFVGTIYINEAKAAMENGTISLNQFELLAAAINTGTNLPSVATPNGQAAFLFLLTSALAPLIRLSYGRMVWMALPYTIVLTCVGLLCVEFTLAPMTEWMTQQGWLATLS.

12 helical membrane passes run 23–43 (LALL…PFIA), 52–72 (IFTL…LLAI), 97–117 (LLLM…LFIF), 120–140 (LLLS…AAAF), 144–164 (FLDA…FYGI), 202–222 (LMMH…VGEP), 238–258 (FFLR…LTCL), 303–323 (ALIG…VGLI), 353–373 (FTAL…QSLF), 391–411 (LFYL…VGTI), 447–467 (ATPN…APLI), and 475–495 (VWMA…CVEF).

This sequence belongs to the NhaB Na(+)/H(+) (TC 2.A.34) antiporter family.

The protein resides in the cell inner membrane. It catalyses the reaction 2 Na(+)(in) + 3 H(+)(out) = 2 Na(+)(out) + 3 H(+)(in). Functionally, na(+)/H(+) antiporter that extrudes sodium in exchange for external protons. This chain is Na(+)/H(+) antiporter NhaB, found in Escherichia fergusonii (strain ATCC 35469 / DSM 13698 / CCUG 18766 / IAM 14443 / JCM 21226 / LMG 7866 / NBRC 102419 / NCTC 12128 / CDC 0568-73).